The primary structure comprises 133 residues: Large ribosomal subunit protein uL16 (133 aa).

Belongs to the universal ribosomal protein uL16 family. As to quaternary structure, part of the 50S ribosomal subunit.

Functionally, binds 23S rRNA and is also seen to make contacts with the A and possibly P site tRNAs. The protein is Large ribosomal subunit protein uL16 of Blochmanniella floridana.